A 436-amino-acid chain; its full sequence is Protein arginine methyltransferase NDUFAF7, mitochondrial (436 aa).

Residues 1 to 41 (MNALVRRCVARTGIPSIWRRKCFSSGNEPAESNHVTPMLRH) constitute a mitochondrion transit peptide. The interval 413-436 (QGGKACQSEAPSTSVPGFDELVWH) is disordered.

Belongs to the NDUFAF7 family. In terms of assembly, interacts with NDUFS2.

The protein localises to the mitochondrion. It carries out the reaction L-arginyl-[protein] + 2 S-adenosyl-L-methionine = N(omega),N(omega)'-dimethyl-L-arginyl-[protein] + 2 S-adenosyl-L-homocysteine + 2 H(+). Functionally, arginine methyltransferase involved in the assembly or stability of mitochondrial NADH:ubiquinone oxidoreductase complex (complex I). Acts by mediating symmetric dimethylation of 'Arg-118' of NDUFS2 after it assembles into the complex I, stabilizing the early intermediate complex. This Rattus norvegicus (Rat) protein is Protein arginine methyltransferase NDUFAF7, mitochondrial.